We begin with the raw amino-acid sequence, 33 residues long: Potassium channel toxin alpha-KTx 24.1 (33 aa).

Cystine bridges form between cysteine 4–cysteine 23, cysteine 9–cysteine 28, cysteine 13–cysteine 30, and cysteine 18–cysteine 33.

Belongs to the short scorpion toxin superfamily. Potassium channel inhibitor family. Alpha-KTx 24 subfamily. Contains 4 disulfide bonds. As to expression, expressed by the venom gland.

Its subcellular location is the secreted. Its function is as follows. Reversibly blocks voltage-gated potassium channels Kv1.2/KCNA2, Kv1.3/KCNA3 and, weakly, Shaker B. In Pandinus imperator (Emperor scorpion), this protein is Potassium channel toxin alpha-KTx 24.1.